The primary structure comprises 508 residues: Acyl-CoA-binding domain-containing protein 5 (508 aa).

The 90-residue stretch at 44-133 folds into the ACB domain; sequence YETRFEAAVK…MKKIIETMPM (90 aa). Residues 55 to 64, 75 to 79, lysine 101, and tyrosine 120 each bind an acyl-CoA; these read IQSLPKNGSF and YSFYK. The segment at 175–215 is disordered; it reads AKAVNGKAESSDSGAESEEEEAQEELKGAEQSGSDDKKTLK. A coiled-coil region spans residues 181 to 214; the sequence is KAESSDSGAESEEEEAQEELKGAEQSGSDDKKTL. Serine 184, serine 185, serine 187, serine 191, serine 206, and serine 233 each carry phosphoserine. Positions 198-215 are enriched in basic and acidic residues; it reads EELKGAEQSGSDDKKTLK. Positions 240-260 are enriched in basic and acidic residues; it reads SDIHTDSSRSTRSSEDEKPGD. The segment at 240 to 300 is disordered; sequence SDIHTDSSRS…LTSDSDSEVY (61 aa). Residue serine 303 is modified to Phosphoserine. Disordered regions lie at residues 318-340 and 353-419; these read PTQHLESSGFCEDAQQSPGNGSI and EVKH…RGSR. Residues 353-376 show a composition bias toward basic and acidic residues; the sequence is EVKHGGEDGRSSSGAPHRETRGGE. Position 405 is a phosphoserine (serine 405). The segment covering 408 to 418 has biased composition (basic and acidic residues); it reads DGERWGSDRGS. Residues 428–453 are a coiled coil; the sequence is LVLIRLQEDMQNVLQRLHKLETLTAS. N6-acetyllysine is present on lysine 446. A helical membrane pass occupies residues 480-500; the sequence is GALAFAIIWPFIAQWLAHLYY.

Belongs to the ATG37 family.

It localises to the peroxisome membrane. Acyl-CoA binding protein which acts as the peroxisome receptor for pexophagy but is dispensable for aggrephagy and nonselective autophagy. Binds medium- and long-chain acyl-CoA esters. The sequence is that of Acyl-CoA-binding domain-containing protein 5 (Acbd5) from Mus musculus (Mouse).